A 194-amino-acid polypeptide reads, in one-letter code: MAKYNEKELADTSKFLSFVLRHKPEAIGIVLDREGWADIDKLILCAQKAGKRLTRALLDTVVATSDKKRFSYSSDGRCIRAVQGHSTSQVAISFAEKTPPQFLYHGTASRFLDEIKKQGLIAGERHYVHLSADEATARKVGARYGSPVILTVKAQEMAKRGIPFWQAENGVWLTSTVAVEFLEWPFMPAGVQKQ.

The protein belongs to the KptA/TPT1 family.

Functionally, removes the 2'-phosphate from RNA via an intermediate in which the phosphate is ADP-ribosylated by NAD followed by a presumed transesterification to release the RNA and generate ADP-ribose 1''-2''-cyclic phosphate (APPR&gt;P). May function as an ADP-ribosylase. This Escherichia coli O45:K1 (strain S88 / ExPEC) protein is Probable RNA 2'-phosphotransferase.